Here is a 142-residue protein sequence, read N- to C-terminus: Large ribosomal subunit protein uL13 (142 aa).

Belongs to the universal ribosomal protein uL13 family. In terms of assembly, part of the 50S ribosomal subunit.

Functionally, this protein is one of the early assembly proteins of the 50S ribosomal subunit, although it is not seen to bind rRNA by itself. It is important during the early stages of 50S assembly. In Vibrio cholerae serotype O1 (strain M66-2), this protein is Large ribosomal subunit protein uL13.